Consider the following 639-residue polypeptide: tRNA uridine 5-carboxymethylaminomethyl modification enzyme MnmG (639 aa).

FAD contacts are provided by residues Gly-13 to Gly-18, Val-125, and Ser-180. Gly-273–Phe-287 is an NAD(+) binding site. Gln-370 provides a ligand contact to FAD. The tract at residues Lys-620–Ala-639 is disordered.

This sequence belongs to the MnmG family. Homodimer. Heterotetramer of two MnmE and two MnmG subunits. The cofactor is FAD.

Its subcellular location is the cytoplasm. In terms of biological role, NAD-binding protein involved in the addition of a carboxymethylaminomethyl (cmnm) group at the wobble position (U34) of certain tRNAs, forming tRNA-cmnm(5)s(2)U34. The polypeptide is tRNA uridine 5-carboxymethylaminomethyl modification enzyme MnmG (Thioalkalivibrio sulfidiphilus (strain HL-EbGR7)).